We begin with the raw amino-acid sequence, 317 residues long: MPAQGSQRSXLGSLNSTLMATPSLGLAANQSGPQCLEVSVPDGLFLCLGLVSLVENMLVVAAIAKNRNLHSPMYCFICCLALSDLLVSISNVLETAVMLLLEAGALAVGATVVQQLDNVIDVLICSSMVSSLCFLGAIAMDRYISIFYALRYHSIVTLSRAQWATAAVWAASILSSTLFIAYYDRTVVLLCLVVFFLAMLVLMAVLYAHMLTQACQHVQGITRLHKRQHLVQQGFGLKGAATLTILLGVFLLCWGPFFLHLTLIAVCPQHPTCSCVFKNFKLFLALIICNAIVDPLIYAFRSQELRKTLKEVLLFSW.

Topologically, residues 1-37 are extracellular; the sequence is MPAQGSQRSXLGSLNSTLMATPSLGLAANQSGPQCLE. 2 N-linked (GlcNAc...) asparagine glycosylation sites follow: Asn-15 and Asn-29. Residues 38–63 form a helical membrane-spanning segment; that stretch reads VSVPDGLFLCLGLVSLVENMLVVAAI. At 64-72 the chain is on the cytoplasmic side; the sequence is AKNRNLHSP. Residues 73 to 93 traverse the membrane as a helical segment; it reads MYCFICCLALSDLLVSISNVL. Residues 94–118 lie on the Extracellular side of the membrane; it reads ETAVMLLLEAGALAVGATVVQQLDN. A helical membrane pass occupies residues 119–140; it reads VIDVLICSSMVSSLCFLGAIAM. The Cytoplasmic portion of the chain corresponds to 141 to 163; the sequence is DRYISIFYALRYHSIVTLSRAQW. The helical transmembrane segment at 164-183 threads the bilayer; that stretch reads ATAAVWAASILSSTLFIAYY. Over 184 to 191 the chain is Extracellular; sequence DRTVVLLC. Residues 192 to 211 form a helical membrane-spanning segment; that stretch reads LVVFFLAMLVLMAVLYAHML. At 212 to 240 the chain is on the cytoplasmic side; it reads TQACQHVQGITRLHKRQHLVQQGFGLKGA. A helical transmembrane segment spans residues 241–266; it reads ATLTILLGVFLLCWGPFFLHLTLIAV. The Extracellular portion of the chain corresponds to 267–279; that stretch reads CPQHPTCSCVFKN. Residues 280-300 traverse the membrane as a helical segment; the sequence is FKLFLALIICNAIVDPLIYAF. Topologically, residues 301–317 are cytoplasmic; that stretch reads RSQELRKTLKEVLLFSW.

The protein belongs to the G-protein coupled receptor 1 family. As to quaternary structure, interacts with MGRN1, but does not undergo MGRN1-mediated ubiquitination; this interaction competes with GNAS-binding and thus inhibits agonist-induced cAMP production. Interacts with OPN3; the interaction results in a decrease in MC1R-mediated cAMP signaling and ultimately a decrease in melanin production in melanocytes.

The protein localises to the cell membrane. In terms of biological role, receptor for MSH (alpha, beta and gamma) and ACTH. The activity of this receptor is mediated by G proteins which activate adenylate cyclase. Mediates melanogenesis, the production of eumelanin (black/brown) and phaeomelanin (red/yellow), via regulation of cAMP signaling in melanocytes. This Galago senegalensis (Northern lesser bushbaby) protein is Melanocyte-stimulating hormone receptor (MC1R).